A 75-amino-acid polypeptide reads, in one-letter code: Conotoxin Vt15.1 (75 aa).

An N-terminal signal peptide occupies residues 1–19 (MMPVILPLLLSLAIRGGDG). Residues 20-43 (QAIQGDRDLIAKLFKRYQEHGLSV) constitute a propeptide that is removed on maturation. Trp73 carries the post-translational modification Tryptophan amide.

The protein belongs to the conotoxin V superfamily. In terms of processing, contains 4 disulfide bonds. As to expression, expressed by the venom duct.

It is found in the secreted. The sequence is that of Conotoxin Vt15.1 from Conus planorbis (Planorbis cone).